Consider the following 297-residue polypeptide: Phosphatidylserine decarboxylase proenzyme (297 aa).

Catalysis depends on charge relay system; for autoendoproteolytic cleavage activity residues Asp90, His147, and Ser252. Ser252 acts as the Schiff-base intermediate with substrate; via pyruvic acid; for decarboxylase activity in catalysis. Ser252 bears the Pyruvic acid (Ser); by autocatalysis mark.

It belongs to the phosphatidylserine decarboxylase family. PSD-B subfamily. Prokaryotic type I sub-subfamily. In terms of assembly, heterodimer of a large membrane-associated beta subunit and a small pyruvoyl-containing alpha subunit. It depends on pyruvate as a cofactor. In terms of processing, is synthesized initially as an inactive proenzyme. Formation of the active enzyme involves a self-maturation process in which the active site pyruvoyl group is generated from an internal serine residue via an autocatalytic post-translational modification. Two non-identical subunits are generated from the proenzyme in this reaction, and the pyruvate is formed at the N-terminus of the alpha chain, which is derived from the carboxyl end of the proenzyme. The autoendoproteolytic cleavage occurs by a canonical serine protease mechanism, in which the side chain hydroxyl group of the serine supplies its oxygen atom to form the C-terminus of the beta chain, while the remainder of the serine residue undergoes an oxidative deamination to produce ammonia and the pyruvoyl prosthetic group on the alpha chain. During this reaction, the Ser that is part of the protease active site of the proenzyme becomes the pyruvoyl prosthetic group, which constitutes an essential element of the active site of the mature decarboxylase.

It is found in the cell membrane. The enzyme catalyses a 1,2-diacyl-sn-glycero-3-phospho-L-serine + H(+) = a 1,2-diacyl-sn-glycero-3-phosphoethanolamine + CO2. Its pathway is phospholipid metabolism; phosphatidylethanolamine biosynthesis; phosphatidylethanolamine from CDP-diacylglycerol: step 2/2. Functionally, catalyzes the formation of phosphatidylethanolamine (PtdEtn) from phosphatidylserine (PtdSer). The chain is Phosphatidylserine decarboxylase proenzyme from Stutzerimonas stutzeri (strain A1501) (Pseudomonas stutzeri).